The chain runs to 317 residues: Biotin synthase (317 aa).

The region spanning 42–260 (NRIQLSTLLS…IAVTRLCMPK (219 aa)) is the Radical SAM core domain. Residues cysteine 57, cysteine 61, and cysteine 64 each contribute to the [4Fe-4S] cluster site. Residues cysteine 101, cysteine 132, cysteine 192, and arginine 264 each contribute to the [2Fe-2S] cluster site.

This sequence belongs to the radical SAM superfamily. Biotin synthase family. Homodimer. The cofactor is [4Fe-4S] cluster. [2Fe-2S] cluster is required as a cofactor.

The catalysed reaction is (4R,5S)-dethiobiotin + (sulfur carrier)-SH + 2 reduced [2Fe-2S]-[ferredoxin] + 2 S-adenosyl-L-methionine = (sulfur carrier)-H + biotin + 2 5'-deoxyadenosine + 2 L-methionine + 2 oxidized [2Fe-2S]-[ferredoxin]. The protein operates within cofactor biosynthesis; biotin biosynthesis; biotin from 7,8-diaminononanoate: step 2/2. Its function is as follows. Catalyzes the conversion of dethiobiotin (DTB) to biotin by the insertion of a sulfur atom into dethiobiotin via a radical-based mechanism. This Thiobacillus denitrificans (strain ATCC 25259 / T1) protein is Biotin synthase.